The primary structure comprises 867 residues: Alanine--tRNA ligase (867 aa).

Zn(2+)-binding residues include H555, H559, C657, and H661.

The protein belongs to the class-II aminoacyl-tRNA synthetase family. Zn(2+) is required as a cofactor.

The protein resides in the cytoplasm. The catalysed reaction is tRNA(Ala) + L-alanine + ATP = L-alanyl-tRNA(Ala) + AMP + diphosphate. Catalyzes the attachment of alanine to tRNA(Ala) in a two-step reaction: alanine is first activated by ATP to form Ala-AMP and then transferred to the acceptor end of tRNA(Ala). Also edits incorrectly charged Ser-tRNA(Ala) and Gly-tRNA(Ala) via its editing domain. The protein is Alanine--tRNA ligase of Psychromonas ingrahamii (strain DSM 17664 / CCUG 51855 / 37).